The chain runs to 404 residues: Probable tRNA sulfurtransferase (404 aa).

In terms of domain architecture, THUMP spans 61–166 (EAVSERLKDV…SGYSYIMCDE (106 aa)). ATP is bound by residues 184-185 (LL), 209-210 (HF), Arg-266, Gly-288, and Gln-297.

This sequence belongs to the ThiI family.

The protein resides in the cytoplasm. The catalysed reaction is [ThiI sulfur-carrier protein]-S-sulfanyl-L-cysteine + a uridine in tRNA + 2 reduced [2Fe-2S]-[ferredoxin] + ATP + H(+) = [ThiI sulfur-carrier protein]-L-cysteine + a 4-thiouridine in tRNA + 2 oxidized [2Fe-2S]-[ferredoxin] + AMP + diphosphate. It carries out the reaction [ThiS sulfur-carrier protein]-C-terminal Gly-Gly-AMP + S-sulfanyl-L-cysteinyl-[cysteine desulfurase] + AH2 = [ThiS sulfur-carrier protein]-C-terminal-Gly-aminoethanethioate + L-cysteinyl-[cysteine desulfurase] + A + AMP + 2 H(+). The protein operates within cofactor biosynthesis; thiamine diphosphate biosynthesis. In terms of biological role, catalyzes the ATP-dependent transfer of a sulfur to tRNA to produce 4-thiouridine in position 8 of tRNAs, which functions as a near-UV photosensor. Also catalyzes the transfer of sulfur to the sulfur carrier protein ThiS, forming ThiS-thiocarboxylate. This is a step in the synthesis of thiazole, in the thiamine biosynthesis pathway. The sulfur is donated as persulfide by IscS. The sequence is that of Probable tRNA sulfurtransferase from Bacillus cereus (strain B4264).